Reading from the N-terminus, the 381-residue chain is Regulatory protein RapF (381 aa).

Residues Leu40, Met43, and Glu45 each contribute to the Mn(2+) site. TPR repeat units follow at residues 101–137, 148–181, 182–215, 222–255, 262–295, and 337–370; these read YYFN…VKDR, SESY…NIRL, LQCH…AEAE, GRTL…FEES, PQAY…SQKA, and EDFA…RQLI.

It belongs to the Rap family. Monomer. Is monomeric either alone or in complex with PhrF. Interacts specifically with the C-terminal DNA-binding domain of ComA. Interacts with PhrF.

The protein localises to the cytoplasm. Its activity is regulated as follows. Inhibited by PhrF, which prevents RapF-ComA interaction. Interaction with PhrF induces a conformational change in RapF, which is propagated to the ComA binding site and causes the dissociation of ComA from RapF. Its function is as follows. Involved in the regulation of genetic competence development. Inhibits the activity of ComA, a transcriptional factor that regulates the development of genetic competence. Acts by binding to ComA, leading to the inhibition of its DNA-binding activity. May also affect transcription independently of ComA. The protein is Regulatory protein RapF (rapF) of Bacillus subtilis (strain 168).